We begin with the raw amino-acid sequence, 147 residues long: Transthyretin (147 aa).

Residues M1–A20 form the signal peptide. A Sulfocysteine modification is found at C30. Residue K35 participates in L-thyroxine binding. E62 is modified (4-carboxyglutamate). A Phosphoserine modification is found at S72. Residue E74 coordinates L-thyroxine. Residue N118 is glycosylated (N-linked (GlcNAc...) asparagine). S137 serves as a coordination point for L-thyroxine.

Belongs to the transthyretin family. Homotetramer. Dimer of dimers. In the homotetramer, subunits assemble around a central channel that can accommodate two ligand molecules. Interacts with RBP4. Post-translationally, sulfonation of the reactive cysteine Cys-30 enhances the stability of the native conformation of TTR, avoiding misassembly of the protein leading to amyloid formation. Detected in plasma (at protein level). Detected in liver.

The protein localises to the secreted. Thyroid hormone-binding protein. Probably transports thyroxine from the bloodstream to the brain. The sequence is that of Transthyretin (Ttr) from Mus musculus (Mouse).